Consider the following 296-residue polypeptide: MDQKPDERVQSHRCELLDLPWEDVLVSHVFCHLPLRLLVSLQRVSKSFRSLIQVYLDNCRTFDPAQTGPHIPREAFCSILRHNQVLQHLSVTNCSDWITDTDLLPVIGQNQQLQHVDLRGCAQLSRRALVAVSLSCPRLQHLSLAHCEWVDSLALRSLADHCPMLRSLDLTACRQLKDPAVCYLAGKCPELRALSVAVNANITDTAVEEVAKKCREMERLDLTGCLRVRNEAIRTLAEYCPKLQSLKVNHCHNVTESSLGVLRRRNVEIDVEPPLQRALVLLQDVVGFAPFINLQI.

An F-box domain is found at 16–63; sequence LLDLPWEDVLVSHVFCHLPLRLLVSLQRVSKSFRSLIQVYLDNCRTFD. 5 LRR repeats span residues 138 to 159, 164 to 185, 190 to 211, 216 to 237, and 242 to 263; these read RLQH…RSLA, MLRS…CYLA, ELRA…EEVA, EMER…RTLA, and KLQS…GVLR.

It belongs to the FBXL15 family. In terms of assembly, part of the SCF (SKP1-CUL1-F-box) E3 ubiquitin-protein ligase complex SCF(FBXL15).

The protein localises to the cytoplasm. It participates in protein modification; protein ubiquitination. Substrate recognition component of a SCF (SKP1-CUL1-F-box protein) E3 ubiquitin-protein ligase complex which mediates the ubiquitination and subsequent proteasomal degradation of target proteins. Acts as a positive regulator of the BMP signaling pathway. Required for dorsal/ventral pattern formation. In Danio rerio (Zebrafish), this protein is F-box/LRR-repeat protein 15 (fbxl15).